We begin with the raw amino-acid sequence, 475 residues long: Eukaryotic translation initiation factor 3 subunit L (475 aa).

One can recognise a PCI domain in the interval 257-451; sequence DAIRMFSHIL…DLDYAMQGDL (195 aa).

Belongs to the eIF-3 subunit L family. Component of the eukaryotic translation initiation factor 3 (eIF-3) complex.

It localises to the cytoplasm. In terms of biological role, component of the eukaryotic translation initiation factor 3 (eIF-3) complex, which is involved in protein synthesis of a specialized repertoire of mRNAs and, together with other initiation factors, stimulates binding of mRNA and methionyl-tRNAi to the 40S ribosome. The eIF-3 complex specifically targets and initiates translation of a subset of mRNAs involved in cell proliferation. This is Eukaryotic translation initiation factor 3 subunit L from Botryotinia fuckeliana (strain B05.10) (Noble rot fungus).